A 72-amino-acid polypeptide reads, in one-letter code: Bowman-Birk type trypsin inhibitor (72 aa).

7 disulfide bridges follow: C12/C66, C13/C28, C16/C62, C18/C26, C36/C43, C40/C55, and C45/C53.

Belongs to the Bowman-Birk serine protease inhibitor family.

The polypeptide is Bowman-Birk type trypsin inhibitor (Vigna radiata var. radiata (Mung bean)).